A 212-amino-acid polypeptide reads, in one-letter code: Peptide methionine sulfoxide reductase MsrA (212 aa).

Residue Cys52 is part of the active site.

This sequence belongs to the MsrA Met sulfoxide reductase family.

It carries out the reaction L-methionyl-[protein] + [thioredoxin]-disulfide + H2O = L-methionyl-(S)-S-oxide-[protein] + [thioredoxin]-dithiol. It catalyses the reaction [thioredoxin]-disulfide + L-methionine + H2O = L-methionine (S)-S-oxide + [thioredoxin]-dithiol. Has an important function as a repair enzyme for proteins that have been inactivated by oxidation. Catalyzes the reversible oxidation-reduction of methionine sulfoxide in proteins to methionine. The chain is Peptide methionine sulfoxide reductase MsrA from Shigella boydii serotype 4 (strain Sb227).